The chain runs to 247 residues: Neurotrophic factor BDNF precursor form (247 aa).

The N-terminal stretch at 1 to 18 (MTILFLTMVISYFGCMKA) is a signal peptide. Positions 19 to 128 (APMKEANIRG…AANMSMRVRR (110 aa)) are excised as a propeptide. N-linked (GlcNAc...) asparagine glycosylation is present at Asn-121. 3 disulfides stabilise this stretch: Cys-141–Cys-208, Cys-186–Cys-237, and Cys-196–Cys-239.

Belongs to the NGF-beta family. As to quaternary structure, monomers and homodimers. Binds to NTRK2/TRKB. Can form heterodimers with other neurotrophin family members, such as NTF3 and NTF4 (in vitro), but the physiological relevance of this is not clear. BDNF precursor form: interacts with the heterodimer formed by NGFR and SORCS2. Post-translationally, N-glycosylated and glycosulfated, contrary to mature BDNF. Mature BDNF is produced by proteolytic removal of the propeptide, catalyzed by a FURIN family member. In addition, the precursor form is proteolytically cleaved within the propeptide, but this is not an obligatory intermediate for the production of mature BDNF. Can be converted into mature BDNF by plasmin (PLG). Detected in blood plasma and in saliva (at protein level). Brain. Highly expressed in hippocampus, amygdala, cerebral cortex and cerebellum. Also expressed in heart, lung, skeletal muscle, testis, prostate and placenta.

It localises to the secreted. Functionally, important signaling molecule that activates signaling cascades downstream of NTRK2. During development, promotes the survival and differentiation of selected neuronal populations of the peripheral and central nervous systems. Participates in axonal growth, pathfinding and in the modulation of dendritic growth and morphology. Major regulator of synaptic transmission and plasticity at adult synapses in many regions of the CNS. The versatility of BDNF is emphasized by its contribution to a range of adaptive neuronal responses including long-term potentiation (LTP), long-term depression (LTD), certain forms of short-term synaptic plasticity, as well as homeostatic regulation of intrinsic neuronal excitability. In terms of biological role, important signaling molecule that activates signaling cascades downstream of NTRK2. Activates signaling cascades via the heterodimeric receptor formed by NGFR and SORCS2. Signaling via NGFR and SORCS2 plays a role in synaptic plasticity and long-term depression (LTD). Binding to NGFR and SORCS2 promotes neuronal apoptosis. Promotes neuronal growth cone collapse. The sequence is that of Neurotrophic factor BDNF precursor form from Homo sapiens (Human).